The primary structure comprises 353 residues: UPF0283 membrane protein YcjF (353 aa).

A run of 3 helical transmembrane segments spans residues methionine 70–threonine 90, valine 100–valine 120, and glutamate 213–tryptophan 233.

Belongs to the UPF0283 family.

It localises to the cell inner membrane. The sequence is that of UPF0283 membrane protein YcjF from Escherichia coli O139:H28 (strain E24377A / ETEC).